The chain runs to 124 residues: Heat-labile enterotoxin B chain (124 aa).

Positions 1-21 are cleaved as a signal peptide; it reads MNKVKFYVLFTALLSSLCAHG. Cysteines 30 and 107 form a disulfide.

In terms of assembly, heterohexamer of one A chain and of five B chains.

Its function is as follows. The biological activity of the toxin is produced by the A chain, which activates intracellular adenyl cyclase. In Escherichia coli, this protein is Heat-labile enterotoxin B chain (eltB).